The sequence spans 139 residues: Nucleoside diphosphate kinase (139 aa).

6 residues coordinate ATP: Lys10, Phe58, Arg86, Thr92, Arg104, and Asn114. His117 (pros-phosphohistidine intermediate) is an active-site residue.

It belongs to the NDK family. Homotetramer. Requires Mg(2+) as cofactor.

It is found in the cytoplasm. It catalyses the reaction a 2'-deoxyribonucleoside 5'-diphosphate + ATP = a 2'-deoxyribonucleoside 5'-triphosphate + ADP. The catalysed reaction is a ribonucleoside 5'-diphosphate + ATP = a ribonucleoside 5'-triphosphate + ADP. Functionally, major role in the synthesis of nucleoside triphosphates other than ATP. The ATP gamma phosphate is transferred to the NDP beta phosphate via a ping-pong mechanism, using a phosphorylated active-site intermediate. The chain is Nucleoside diphosphate kinase from Rhodococcus erythropolis (strain PR4 / NBRC 100887).